Consider the following 55-residue polypeptide: Large ribosomal subunit protein bL33B (55 aa).

The protein belongs to the bacterial ribosomal protein bL33 family.

The chain is Large ribosomal subunit protein bL33B from Salinispora arenicola (strain CNS-205).